Here is a 208-residue protein sequence, read N- to C-terminus: MKRTATLLVVALILALNTAQAGQLQALEDYYRDVETVQGVFNQFTLDDRGQVIEESSGDFAIHRPDRFHWSYAGPFSQEIIADGERLWVYDVELDQVTVRDQRAVLGSAPAQLLSGDYADLEELFELAETEDYVRLTPRDGGEAFDEARLGMRDGHPSALEIDDALGQVTRVELDEVRLNDAVDEERFRFEPPEGVDVYEADPDEGIR.

Positions 1 to 21 are cleaved as a signal peptide; it reads MKRTATLLVVALILALNTAQA.

The protein belongs to the LolA family. Monomer.

The protein localises to the periplasm. Functionally, participates in the translocation of lipoproteins from the inner membrane to the outer membrane. Only forms a complex with a lipoprotein if the residue after the N-terminal Cys is not an aspartate (The Asp acts as a targeting signal to indicate that the lipoprotein should stay in the inner membrane). This is Outer-membrane lipoprotein carrier protein from Halorhodospira halophila (strain DSM 244 / SL1) (Ectothiorhodospira halophila (strain DSM 244 / SL1)).